We begin with the raw amino-acid sequence, 525 residues long: D-aminopeptidase (525 aa).

S62 (nucleophile) is an active-site residue. K65 functions as the Proton donor/acceptor in the catalytic mechanism. An important for specificity region spans residues 485-495 (PRALDHTAPGD). A substrate-binding site is contributed by D489.

The protein belongs to the peptidase S12 family. Homodimer.

The enzyme catalyses Release of an N-terminal D-amino acid from a peptide, Xaa-|-Yaa-, in which Xaa is preferably D-Ala, D-Ser or D-Thr. D-amino acid amides and methyl esters also are hydrolyzed, as is glycine amide.. Inhibited by beta-lactam compounds such as 6-aminopenicillic acid, 7-aminocephalosporanic acid, benzylpenicillin and ampicillin. Inhibited by p-chloromercuribenzoate. Its function is as follows. Hydrolyzes N-terminal residues in D-amino acid-containing peptides. The chain is D-aminopeptidase from Gluconobacter oxydans (strain 621H) (Gluconobacter suboxydans).